Reading from the N-terminus, the 557-residue chain is Aerobic glycerol-3-phosphate dehydrogenase (557 aa).

21 to 49 (DLVIIGGGITGAGIALDASERGMKVALVE) lines the FAD pocket.

This sequence belongs to the FAD-dependent glycerol-3-phosphate dehydrogenase family. Requires FAD as cofactor.

The protein localises to the cytoplasm. It catalyses the reaction a quinone + sn-glycerol 3-phosphate = dihydroxyacetone phosphate + a quinol. Its pathway is polyol metabolism; glycerol degradation via glycerol kinase pathway; glycerone phosphate from sn-glycerol 3-phosphate (aerobic route): step 1/1. This is Aerobic glycerol-3-phosphate dehydrogenase (glpD) from Staphylococcus aureus (strain USA300).